Reading from the N-terminus, the 624-residue chain is Glucoamylase (624 aa).

The signal sequence occupies residues methionine 1–serine 18. Residues asparagine 26–glutamate 132 enclose the CBM21 domain. N-linked (GlcNAc...) asparagine glycosylation is found at asparagine 54, asparagine 70, asparagine 98, asparagine 111, asparagine 168, asparagine 267, and asparagine 333. Catalysis depends on aspartate 340, which acts as the Proton acceptor. Residue glutamate 343 is the Proton donor of the active site. Residues asparagine 460 and asparagine 582 are each glycosylated (N-linked (GlcNAc...) asparagine).

The protein belongs to the glycosyl hydrolase 15 family.

It catalyses the reaction Hydrolysis of terminal (1-&gt;4)-linked alpha-D-glucose residues successively from non-reducing ends of the chains with release of beta-D-glucose.. This chain is Glucoamylase (GAA), found in Blastobotrys adeninivorans (Yeast).